Consider the following 306-residue polypeptide: Lipoyl synthase 2 (306 aa).

The [4Fe-4S] cluster site is built by C49, C54, C60, C75, C79, C82, and S300. The region spanning 61 to 289 (YAAGTATFLL…AEVACKLGFA (229 aa)) is the Radical SAM core domain.

This sequence belongs to the radical SAM superfamily. Lipoyl synthase family. It depends on [4Fe-4S] cluster as a cofactor.

The protein resides in the cytoplasm. It carries out the reaction [[Fe-S] cluster scaffold protein carrying a second [4Fe-4S](2+) cluster] + N(6)-octanoyl-L-lysyl-[protein] + 2 oxidized [2Fe-2S]-[ferredoxin] + 2 S-adenosyl-L-methionine + 4 H(+) = [[Fe-S] cluster scaffold protein] + N(6)-[(R)-dihydrolipoyl]-L-lysyl-[protein] + 4 Fe(3+) + 2 hydrogen sulfide + 2 5'-deoxyadenosine + 2 L-methionine + 2 reduced [2Fe-2S]-[ferredoxin]. The protein operates within protein modification; protein lipoylation via endogenous pathway; protein N(6)-(lipoyl)lysine from octanoyl-[acyl-carrier-protein]: step 2/2. Functionally, catalyzes the radical-mediated insertion of two sulfur atoms into the C-6 and C-8 positions of the octanoyl moiety bound to the lipoyl domains of lipoate-dependent enzymes, thereby converting the octanoylated domains into lipoylated derivatives. The sequence is that of Lipoyl synthase 2 from Prochlorococcus marinus (strain MIT 9313).